A 224-amino-acid polypeptide reads, in one-letter code: Probable septum site-determining protein MinC (224 aa).

This sequence belongs to the MinC family. In terms of assembly, interacts with MinD and FtsZ.

In terms of biological role, cell division inhibitor that blocks the formation of polar Z ring septums. Rapidly oscillates between the poles of the cell to destabilize FtsZ filaments that have formed before they mature into polar Z rings. Prevents FtsZ polymerization. This is Probable septum site-determining protein MinC from Shewanella amazonensis (strain ATCC BAA-1098 / SB2B).